A 946-amino-acid polypeptide reads, in one-letter code: Probable outer membrane protein pmp18 (946 aa).

Residues 1-16 (MQNNRSLSKSSFFVGA) form the signal peptide. An Autotransporter domain is found at 668–946 (QGQIAPTASG…YLHAGTTFKF (279 aa)).

Belongs to the PMP outer membrane protein family.

The protein localises to the secreted. It is found in the cell wall. The protein resides in the cell outer membrane. The polypeptide is Probable outer membrane protein pmp18 (pmp18) (Chlamydia pneumoniae (Chlamydophila pneumoniae)).